Reading from the N-terminus, the 504-residue chain is Sugar transport protein 14 (504 aa).

The Cytoplasmic portion of the chain corresponds to 1 to 25; that stretch reads MAGGALTDEGGLKRAHLYEHRITSY. Transmembrane regions (helical) follow at residues 26–46, 84–104, 121–141, 144–164, 171–191, 205–225, 286–308, 315–337, 352–372, 382–402, 428–448, and 454–474; these read FIFACIVGSMGGSLFGYDLGV, ILTLFTSSLYFAGLISTFGAS, VSFFLGGVINAAAKNILMLIL, IFLGIGIGFGNQAVPLYLSEM, GTVNQLFQLTTCIGILVANLI, LSLGLATVPAILMFLGGLVLP, LVIGAIGLPAFQQLTGMNSILFY, SLGFGGSASLISSTITNAALVVA, FLLLEASVEMFCYMVVVGVTL, LPKSLGLILVVLICLFVLAYG, VVVCVNLFFTALIAQCFLVSL, and GIFLLFAGLILGMGSFVYFLL. The Cytoplasmic segment spans residues 475-504; it reads PETKQVPIEEVYLLWRQHWLWKKYVEDVDE.

This sequence belongs to the major facilitator superfamily. Sugar transporter (TC 2.A.1.1) family.

It localises to the membrane. Functionally, mediates an active uptake of hexoses, probably by sugar/hydrogen symport. The polypeptide is Sugar transport protein 14 (STP14) (Arabidopsis thaliana (Mouse-ear cress)).